The sequence spans 252 residues: Zinc finger CCCH domain-containing protein 28 (252 aa).

Positions 1 to 21 (MSHRRDYGSDAVHVRITHDPP) are enriched in basic and acidic residues. Residues 1–31 (MSHRRDYGSDAVHVRITHDPPPENCFPNSGD) form a disordered region. 2 C3H1-type zinc fingers span residues 71–99 (FFKT…HSAE) and 143–171 (NWKT…HGPS).

The chain is Zinc finger CCCH domain-containing protein 28 from Arabidopsis thaliana (Mouse-ear cress).